The sequence spans 155 residues: MHCPFCNQTDTKVIDSRLVADGVQVRRRRECQACHERFTTFETAELLMPKVIKQDGTREPFDEEKLRNGLQRALEKRPVSVEAIETALHNVRHYLQALGEREIKSLVIGEKVMEELQNLDQVAYVRFASVYRSFQDISEFRAEIDRLQKKPDETA.

A zinc finger spans residues 3–34 (CPFCNQTDTKVIDSRLVADGVQVRRRRECQAC). Residues 49 to 139 (PKVIKQDGTR…VYRSFQDISE (91 aa)) enclose the ATP-cone domain.

This sequence belongs to the NrdR family. Requires Zn(2+) as cofactor.

Functionally, negatively regulates transcription of bacterial ribonucleotide reductase nrd genes and operons by binding to NrdR-boxes. The chain is Transcriptional repressor NrdR from Teredinibacter turnerae (strain ATCC 39867 / T7901).